We begin with the raw amino-acid sequence, 144 residues long: uncharacterized protein (144 aa).

Residues 1–16 form the signal peptide; the sequence is MRKFLIVLLLPLLVLA.

This is an uncharacterized protein from Aquifex aeolicus (strain VF5).